Here is a 419-residue protein sequence, read N- to C-terminus: MSRYVFTSESVTEGHPDKICDQVSDAVLDALLAQDPSSRVACETVVNTGLCMITGEVTSKAQVDFIHLVRNVIKEIGYSGARAGGFDANSCAVLVALDQQSPDIAQGVDEADDHEGDPLDRVGAGDQGIMFGYACNETPELMPLPISLAHRLAKRLAEVRHNGSLEYLLPDGKTQVSVVYENDKPVAIDTILISTQHTAEVAGISDEQGIRERITEDLWTHVVEPATADLALKPSREATKYLVNPTGKFVVGGPQGDAGLTGRKIIVDTYGGYARHGGGAFSGKDPTKVDRSAAYAARYVAKCLVASGLAERAEVQLSYAIGVAKPVSILVESFGTGKVSNAELTELVQEHFDLRPGAIIETFGLRNLPQQRGGRFYQDTAAYGHFGRNDLKAPWEDVAAKSEELVKAEAKRIKQGATV.

His-15 is a binding site for ATP. Residue Asp-17 coordinates Mg(2+). K(+) is bound at residue Glu-43. L-methionine is bound by residues Glu-56 and Gln-100. Residues 100 to 110 are flexible loop; that stretch reads QSPDIAQGVDE. ATP contacts are provided by residues 171–173, 248–249, Asp-257, 263–264, Ala-280, and Lys-284; these read DGK, KF, and RK. Asp-257 is an L-methionine binding site. Lys-288 is an L-methionine binding site.

It belongs to the AdoMet synthase family. Homotetramer; dimer of dimers. Mg(2+) serves as cofactor. Requires K(+) as cofactor.

The protein localises to the cytoplasm. The catalysed reaction is L-methionine + ATP + H2O = S-adenosyl-L-methionine + phosphate + diphosphate. It participates in amino-acid biosynthesis; S-adenosyl-L-methionine biosynthesis; S-adenosyl-L-methionine from L-methionine: step 1/1. Its function is as follows. Catalyzes the formation of S-adenosylmethionine (AdoMet) from methionine and ATP. The overall synthetic reaction is composed of two sequential steps, AdoMet formation and the subsequent tripolyphosphate hydrolysis which occurs prior to release of AdoMet from the enzyme. The chain is S-adenosylmethionine synthase from Parasynechococcus marenigrum (strain WH8102).